The chain runs to 259 residues: Ribonuclease HII (259 aa).

The RNase H type-2 domain occupies 72 to 259 (SYIAGIDEVG…PIKDMIKNKL (188 aa)). 3 residues coordinate a divalent metal cation: D78, E79, and D170.

The protein belongs to the RNase HII family. Requires Mn(2+) as cofactor. The cofactor is Mg(2+).

Its subcellular location is the cytoplasm. The enzyme catalyses Endonucleolytic cleavage to 5'-phosphomonoester.. In terms of biological role, endonuclease that specifically degrades the RNA of RNA-DNA hybrids. The sequence is that of Ribonuclease HII from Bacillus cytotoxicus (strain DSM 22905 / CIP 110041 / 391-98 / NVH 391-98).